We begin with the raw amino-acid sequence, 280 residues long: Large ribosomal subunit protein uL2 (280 aa).

Disordered stretches follow at residues 1–58 (MAIR…GGGH) and 226–280 (MNPV…KHGR). Composition is skewed to basic residues over residues 37–58 (LHGH…GGGH) and 268–280 (IVRR…KHGR).

This sequence belongs to the universal ribosomal protein uL2 family. In terms of assembly, part of the 50S ribosomal subunit. Forms a bridge to the 30S subunit in the 70S ribosome.

In terms of biological role, one of the primary rRNA binding proteins. Required for association of the 30S and 50S subunits to form the 70S ribosome, for tRNA binding and peptide bond formation. It has been suggested to have peptidyltransferase activity; this is somewhat controversial. Makes several contacts with the 16S rRNA in the 70S ribosome. This is Large ribosomal subunit protein uL2 from Mycobacterium avium (strain 104).